The chain runs to 124 residues: Small ribosomal subunit protein eS6 (124 aa).

Belongs to the eukaryotic ribosomal protein eS6 family.

This chain is Small ribosomal subunit protein eS6, found in Methanococcus maripaludis (strain C6 / ATCC BAA-1332).